A 587-amino-acid chain; its full sequence is uncharacterized protein (587 aa).

A YcaO domain is found at Gly-61–Glu-426.

This is an uncharacterized protein from Haemophilus influenzae (strain ATCC 51907 / DSM 11121 / KW20 / Rd).